Consider the following 352-residue polypeptide: S-adenosylmethionine:tRNA ribosyltransferase-isomerase (352 aa).

Belongs to the QueA family. Monomer.

It localises to the cytoplasm. It catalyses the reaction 7-aminomethyl-7-carbaguanosine(34) in tRNA + S-adenosyl-L-methionine = epoxyqueuosine(34) in tRNA + adenine + L-methionine + 2 H(+). It functions in the pathway tRNA modification; tRNA-queuosine biosynthesis. Transfers and isomerizes the ribose moiety from AdoMet to the 7-aminomethyl group of 7-deazaguanine (preQ1-tRNA) to give epoxyqueuosine (oQ-tRNA). This is S-adenosylmethionine:tRNA ribosyltransferase-isomerase from Allorhizobium ampelinum (strain ATCC BAA-846 / DSM 112012 / S4) (Agrobacterium vitis (strain S4)).